A 186-amino-acid chain; its full sequence is Acetyltransferase PA2578 (186 aa).

The region spanning Leu-12–Gln-176 is the N-acetyltransferase domain. Residues Gln-37, Ile-97 to Leu-99, Gly-105, Asn-137, and His-142 to Tyr-144 each bind CoA.

In terms of assembly, homodimer.

Its function is as follows. Catalyzes the transfer of an acetyl group from acetyl coenzyme A (AcCoA) to an acceptor substrate and releases both CoA and the acetylated product. It prefers the antibiotic chloramphenicol. The protein is Acetyltransferase PA2578 of Pseudomonas aeruginosa (strain ATCC 15692 / DSM 22644 / CIP 104116 / JCM 14847 / LMG 12228 / 1C / PRS 101 / PAO1).